The chain runs to 98 residues: Large ribosomal subunit protein eL14 (98 aa).

It belongs to the eukaryotic ribosomal protein eL14 family.

This Hyperthermus butylicus (strain DSM 5456 / JCM 9403 / PLM1-5) protein is Large ribosomal subunit protein eL14.